The following is a 406-amino-acid chain: DNA primase DnaG (406 aa).

Positions 169–247 (PNLIIVEGRA…KIDFVARAPI (79 aa)) constitute a Toprim domain. Mg(2+) contacts are provided by Glu-175, Asp-220, and Asp-222.

The protein belongs to the archaeal DnaG primase family. Forms a ternary complex with MCM helicase and DNA. Component of the archaeal exosome complex. Interacts with Csl4 but not with Rrp4. Mg(2+) serves as cofactor.

It catalyses the reaction ssDNA + n NTP = ssDNA/pppN(pN)n-1 hybrid + (n-1) diphosphate.. Its function is as follows. RNA polymerase that catalyzes the synthesis of short RNA molecules used as primers for DNA polymerase during DNA replication. Can use NTPs but not dNTPs. Binds DNA. Also part of the exosome, which is a complex involved in RNA degradation. Acts as a poly(A)-binding protein that enhances the interaction between heteromeric, adenine-rich transcripts and the exosome. The chain is DNA primase DnaG from Saccharolobus solfataricus (strain ATCC 35092 / DSM 1617 / JCM 11322 / P2) (Sulfolobus solfataricus).